A 110-amino-acid chain; its full sequence is UPF0251 protein PYRAB12660 (110 aa).

Belongs to the UPF0251 family.

The sequence is that of UPF0251 protein PYRAB12660 from Pyrococcus abyssi (strain GE5 / Orsay).